The primary structure comprises 1291 residues: Vacuolating cytotoxin autotransporter (1291 aa).

The N-terminal stretch at 1 to 33 (MEIQQTHRKINRPLVSLALVGALVSITPQQSHA) is a signal peptide. The interval 326-374 (PPEGGYKDKPNDKPSNTTQNNAKNDKQESSQNNSNTQVINPPNSAQKTE) is disordered. Polar residues-rich tracts occupy residues 338 to 347 (KPSNTTQNNA) and 354 to 374 (SSQN…QKTE). Residues 1018 to 1291 (KYEKPTNVWA…ASNLGMRYSF (274 aa)) form the Autotransporter domain.

The protein resides in the periplasm. It is found in the secreted. It localises to the cell surface. Its subcellular location is the cell outer membrane. Induces vacuolation of eukaryotic cells. Causes ulceration and gastric lesions. The sequence is that of Vacuolating cytotoxin autotransporter (vacA) from Helicobacter pylori (Campylobacter pylori).